Consider the following 730-residue polypeptide: ABC transporter G family member 3 (730 aa).

A compositionally biased stretch (low complexity) spans 1–28 (MEEIQSQSDLYRSSSSSASSPTSRVPSS). Positions 1 to 100 (MEEIQSQSDL…MASPPVPEGG (100 aa)) are disordered. Residues 47–56 (DSPEWEDTPD) show a composition bias toward acidic residues. Positions 72 to 91 (NDATTTPVSPSLSKMNSGSM) are enriched in polar residues. Ser93 carries the post-translational modification Phosphoserine. In terms of domain architecture, ABC transporter spans 114-356 (IAWKDLTVTM…FSNAGFPCPI (243 aa)). Residue 151–158 (GPAKSGKS) coordinates ATP. Residues 441 to 653 (TRVAVLTWRS…SIEGLLENEY (213 aa)) form the ABC transmembrane type-2 domain. 6 helical membrane-spanning segments follow: residues 465 to 485 (LILY…LGHS), 495 to 515 (AVFV…PSLL), 532 to 552 (AFVF…LMSI), 575 to 595 (VLNF…IACI), 600 to 620 (YWST…AGHF), and 689 to 709 (MLVL…LLRF).

The protein belongs to the ABC transporter superfamily. ABCG family. Eye pigment precursor importer (TC 3.A.1.204) subfamily.

The protein localises to the membrane. This is ABC transporter G family member 3 (ABCG3) from Arabidopsis thaliana (Mouse-ear cress).